The chain runs to 579 residues: SHC-transforming protein 1 (579 aa).

Position 1 is an N-acetylmethionine (Met1). Residues 1–137 (MDLLPPKPKY…QLGGEEWTRH (137 aa)) form a disordered region. A compositionally biased stretch (low complexity) spans 16–44 (ESLSSLEEGASGSTPPEELPSPSASSLGP). Phosphoserine occurs at positions 36 and 139. The residue at position 154 (Lys154) is an N6-acetyllysine. In terms of domain architecture, PID spans 156–339 (MGPGVSYLVR…AGFDGSAWDE (184 aa)). The tract at residues 337–357 (WDEEEEEPPDHQYYNDFPGKE) is disordered. The interval 340-483 (EEEEPPDHQY…SMAEQLQGEP (144 aa)) is CH1. Phosphotyrosine occurs at positions 349, 350, and 423. Positions 432-451 (ARQAGGGAGPPNPSLNGSAP) are disordered. Ser449 bears the Phosphoserine mark. Residues 484 to 575 (WFHGKLSRRE…GSELCLQQPV (92 aa)) form the SH2 domain.

In terms of assembly, interacts with CPNE3; this interaction may mediate the binding of CPNE3 with ERBB2. Interacts with the NPXY motif of tyrosine-phosphorylated IGF1R and INSR in vitro via the PID domain. Once activated, binds to GRB2. Interacts with tyrosine-phosphorylated DDR2 and CD3T. Interacts with the N-terminal region of APS. Interacts with GRB7 and KIT. Interacts with PTK2/FAK1. Interacts with phosphorylated LRP1 and IRS4. Interacts with FLT4 (tyrosine-phosphorylated). Interacts with PDGFRB (tyrosine-phosphorylated). Interacts with ERBB4. Interacts with TEK/TIE2 (tyrosine-phosphorylated). Interacts with ALK, GAB2, TRIM31, INPP5D/SHIP1 and INPPL1/SHIP2. Interacts with PTPN6/SHP (tyrosine phosphorylated). Identified in a complex containing FGFR4, NCAM1, CDH2, PLCG1, FRS2, SRC, SHC1, GAP43 and CTTN. Interacts with EPHB1 and GRB2; activates the MAPK/ERK cascade to regulate cell migration. Interacts with the Trk receptors NTRK1, NTRK2 and NTRK3; in a phosphotyrosine-dependent manner. Interacts with CEACAM1; this interaction is CEACAM1-phosphorylation-dependent and mediates interaction with EGFR or INSR resulting in decrease coupling of SHC1 to the MAPK3/ERK1-MAPK1/ERK2 pathway. Interacts (via PID domain) with PEAK1 (when phosphorylated at 'Tyr-1177'). Found in a complex with PPP1CA, PPP1CC, SHC1 and PEAK1. In terms of processing, phosphorylated in response to FLT4 signaling. Tyrosine phosphorylated by ligand-activated PDGFRB. May be tyrosine phosphorylated by activated PTK2/FAK1. Tyrosine phosphorylated by TEK/TIE2. Tyrosine phosphorylated by activated PTK2B/PYK2. Dephosphorylation by PTPN2 may regulate interaction with GRB2. Phosphorylated by activated epidermal growth factor receptor. Phosphorylated in response to KIT signaling. Isoform p47Shc and isoform p52Shc are phosphorylated on tyrosine residues of the Pro-rich domain. Isoform p66Shc is phosphorylated on Ser-36 by PRKCB upon treatment with insulin, hydrogen peroxide or irradiation with ultraviolet light. FLT3 signaling promotes tyrosine phosphorylation of isoform p47Shc and isoform p52Shc. Also tyrosine phosphorylated by ligand-activated ALK. In terms of tissue distribution, widely expressed. Expressed in neural stem cells but absent in mature neurons.

Its subcellular location is the cytoplasm. It is found in the cell junction. It localises to the focal adhesion. The protein localises to the mitochondrion matrix. The protein resides in the mitochondrion. In terms of biological role, signaling adapter that couples activated growth factor receptors to signaling pathways. Participates in signaling downstream of the angiopoietin receptor TEK/TIE2, and plays a role in the regulation of endothelial cell migration and sprouting angiogenesis. Participates in a signaling cascade initiated by activated KIT and KITLG/SCF. Isoform p47Shc and isoform p52Shc, once phosphorylated, couple activated receptor kinases to Ras via the recruitment of the GRB2/SOS complex and are implicated in the cytoplasmic propagation of mitogenic signals. Isoform p47Shc and isoform p52 may thus function as initiators of the Ras signaling cascade in various non-neuronal systems. Isoform p66Shc does not mediate Ras activation, but is involved in signal transduction pathways that regulate the cellular response to oxidative stress and life span. Isoform p66Shc acts as a downstream target of the tumor suppressor p53 and is indispensable for the ability of stress-activated p53 to induce elevation of intracellular oxidants, cytochrome c release and apoptosis. The expression of isoform p66Shc has been correlated with life span. In Mus musculus (Mouse), this protein is SHC-transforming protein 1 (Shc1).